Here is a 426-residue protein sequence, read N- to C-terminus: MGFDFKLKISNASQLVVISKGKPFLIGKEMSNIEIIENGTMIIDENGIIFDIGTFKEMEEKYKDKSFEKVLDCTGKSVLPGFVDGHTHPVFSGDRVHEFAMKLAGATYLDVHKAGGGIQFTISHTKNSTEDELYQLLIPRLNRMLKNGTTLIEAKSGYGLETETEMKMLKVLDRASKQFQGVEIVSTYLGGHAIPKGMNASEATDDIINKQIPELKRLKDAGEISPANIDVFLEKGFFEYEDTKRILQAGKDIGLECNFHGDELSYMKSGELAGELGCRAISHLEKVSEDGMKAMAATPTFAVLLPTTAYILRLECPPARRMIELGVPVALGSDFNPNAHCLSMPFVMNLACVLMKMNMNESLVAATLNAAASINKSSTHGSLEVGKFADFVILSADKWEHIIYEMVDPPISHVFKKGNLVFSNNN.

4-imidazolone-5-propanoate contacts are provided by Tyr158 and His192. Tyr158 lines the N-formimidoyl-L-glutamate pocket. His260 lines the Fe(3+) pocket. His260 is a binding site for Zn(2+). Glu263 is a 4-imidazolone-5-propanoate binding site. Asp334 is a binding site for Fe(3+). Asp334 serves as a coordination point for Zn(2+). Asn336 lines the N-formimidoyl-L-glutamate pocket.

Belongs to the metallo-dependent hydrolases superfamily. HutI family. Zn(2+) is required as a cofactor. The cofactor is Fe(3+).

The enzyme catalyses 4-imidazolone-5-propanoate + H2O = N-formimidoyl-L-glutamate. The protein operates within amino-acid degradation; L-histidine degradation into L-glutamate; N-formimidoyl-L-glutamate from L-histidine: step 3/3. In Dictyostelium discoideum (Social amoeba), this protein is Probable imidazolonepropionase (amdhd1).